Consider the following 151-residue polypeptide: uncharacterized protein (151 aa).

This is an uncharacterized protein from Saccharomyces cerevisiae (strain ATCC 204508 / S288c) (Baker's yeast).